The sequence spans 384 residues: S-adenosylmethionine synthase (384 aa).

His-15 serves as a coordination point for ATP. Asp-17 is a binding site for Mg(2+). Position 43 (Glu-43) interacts with K(+). Residues Glu-56 and Gln-99 each coordinate L-methionine. Positions 99-109 (QSPDINQGVDR) are flexible loop. ATP contacts are provided by residues 164–166 (DAK), 231–232 (RF), Asp-240, 246–247 (RK), Ala-263, and Lys-267. Asp-240 is a binding site for L-methionine. Lys-271 contributes to the L-methionine binding site.

The protein belongs to the AdoMet synthase family. As to quaternary structure, homotetramer; dimer of dimers. Mg(2+) is required as a cofactor. K(+) serves as cofactor.

It is found in the cytoplasm. The enzyme catalyses L-methionine + ATP + H2O = S-adenosyl-L-methionine + phosphate + diphosphate. The protein operates within amino-acid biosynthesis; S-adenosyl-L-methionine biosynthesis; S-adenosyl-L-methionine from L-methionine: step 1/1. Its function is as follows. Catalyzes the formation of S-adenosylmethionine (AdoMet) from methionine and ATP. The overall synthetic reaction is composed of two sequential steps, AdoMet formation and the subsequent tripolyphosphate hydrolysis which occurs prior to release of AdoMet from the enzyme. In Shewanella halifaxensis (strain HAW-EB4), this protein is S-adenosylmethionine synthase.